The primary structure comprises 1373 residues: Insulin-like growth factor 1 receptor (1373 aa).

The first 30 residues, 1-30 (MKSGSGGGSPTSLWGLVFLSAALSLWPTSG), serve as a signal peptide directing secretion. A disulfide bridge links Cys33 with Cys52. N-linked (GlcNAc...) asparagine glycans are attached at residues Asn51, Asn102, and Asn135. 13 disulfides stabilise this stretch: Cys150–Cys178, Cys182–Cys205, Cys192–Cys211, Cys215–Cys224, Cys219–Cys230, Cys231–Cys239, Cys235–Cys248, Cys251–Cys260, Cys264–Cys276, Cys282–Cys303, Cys307–Cys321, Cys324–Cys328, and Cys332–Cys354. N-linked (GlcNAc...) asparagine glycosylation occurs at Asn245. N-linked (GlcNAc...) asparagine glycosylation is present at Asn314. N-linked (GlcNAc...) asparagine glycans are attached at residues Asn418 and Asn439. Residues Cys456 and Cys489 are joined by a disulfide bond. 4 consecutive Fibronectin type-III domains span residues 490–610 (ESDV…TNAS), 611–709 (VPSI…TEAE), 735–829 (RPER…TMPA), and 835–928 (IPGP…VPAK). N-linked (GlcNAc...) asparagine glycosylation is found at Asn535, Asn608, Asn623, Asn641, Asn748, Asn757, Asn765, Asn901, and Asn914. Residues 742 to 936 (DVMQVANTTM…AKTTYENFMH (195 aa)) lie on the Extracellular side of the membrane. The helical transmembrane segment at 937–960 (LIIALPVAILLIVGGLVIMLYVFH) threads the bilayer. Topologically, residues 961–1373 (RKRNNSRLGN…ALPLPQSSTC (413 aa)) are cytoplasmic. Residues 978–981 (NPEY) carry the IRS1- and SHC1-binding motif. Tyr981 carries the post-translational modification Phosphotyrosine. The 277-residue stretch at 1000-1276 (ITMNRELGQG…SIKDEMEPSF (277 aa)) folds into the Protein kinase domain. Residues 1006–1014 (LGQGSFGMV) and Lys1034 contribute to the ATP site. The active-site Proton acceptor is the Asp1137. Residues Tyr1163, Tyr1167, and Tyr1168 each carry the phosphotyrosine; by autocatalysis modification. Glycyl lysine isopeptide (Lys-Gly) (interchain with G-Cter in ubiquitin) cross-links involve residues Lys1170 and Lys1173. A Phosphoserine; by GSK3-beta modification is found at Ser1280. A disordered region spans residues 1283–1373 (YSEENKPPEP…ALPLPQSSTC (91 aa)). Position 1284 is a phosphoserine (Ser1284). A compositionally biased stretch (acidic residues) spans 1292–1305 (PEELEMELEMEPEN). A compositionally biased stretch (low complexity) spans 1306–1322 (MESVPLDPSASSASLPL). The segment covering 1323–1332 (PERHSGHKAE) has biased composition (basic and acidic residues).

This sequence belongs to the protein kinase superfamily. Tyr protein kinase family. Insulin receptor subfamily. As to quaternary structure, tetramer of 2 alpha and 2 beta chains linked by disulfide bonds. The alpha chains contribute to the formation of the ligand-binding domain, while the beta chain carries the kinase domain. Interacts with PIK3R1 and with the PTB/PID domains of IRS1 and SHC1 in vitro when autophosphorylated on tyrosine residues. Forms a hybrid receptor with INSR, the hybrid is a tetramer consisting of 1 alpha chain and 1 beta chain of INSR and 1 alpha chain and 1 beta chain of IGF1R. Interacts with ARRB1 and ARRB2. Interacts with GRB10. Interacts with RACK1. Interacts with SOCS1, SOCS2 and SOCS3. Interacts with 14-3-3 proteins. Interacts with NMD2. Interacts with MAP3K5. Interacts with STAT3. Found in a ternary complex with IGF1 and ITGAV:ITGB3 or ITGA6:ITGB4. Interacts (nascent precursor form) with ZFAND2B. Autophosphorylated on tyrosine residues in response to ligand binding. Autophosphorylation occurs in trans, i.e. one subunit of the dimeric receptor phosphorylates tyrosine residues on the other subunit. Autophosphorylation occurs in a sequential manner; Tyr-1167 is predominantly phosphorylated first, followed by phosphorylation of Tyr-1163 and Tyr-1168. While every single phosphorylation increases kinase activity, all three tyrosine residues in the kinase activation loop (Tyr-1163, Tyr-1167 and Tyr-1168) have to be phosphorylated for optimal activity. Can be autophosphorylated at additional tyrosine residues (in vitro). Autophosphorylated is followed by phosphorylation of juxtamembrane tyrosines and C-terminal serines. May also be phosphorylated at Tyr-1163 and Tyr-1168 by mTORC2. Phosphorylation of Tyr-981 is required for IRS1- and SHC1-binding. Phosphorylation of Ser-1280 by GSK-3beta restrains kinase activity and promotes cell surface expression, it requires a priming phosphorylation at Ser-1284. Dephosphorylated by PTPN1. Post-translationally, polyubiquitinated at Lys-1170 and Lys-1173 through both 'Lys-48' and 'Lys-29' linkages, promoting receptor endocytosis and subsequent degradation by the proteasome. Ubiquitination is facilitated by pre-existing phosphorylation. In terms of processing, sumoylated with SUMO1. Controlled by regulated intramembrane proteolysis (RIP). Undergoes metalloprotease-dependent constitutive ectodomain shedding to produce a membrane-anchored 52 kDa C-Terminal fragment which is further processed by presenilin gamma-secretase to yield an intracellular 50 kDa fragment.

It is found in the cell membrane. It carries out the reaction L-tyrosyl-[protein] + ATP = O-phospho-L-tyrosyl-[protein] + ADP + H(+). Activated by autophosphorylation at Tyr-1163, Tyr-1167 and Tyr-1168 on the kinase activation loop; phosphorylation at all three tyrosine residues is required for optimal kinase activity. Inhibited by MSC1609119A-1, BMS-754807, PQIP, benzimidazole pyridinone, isoquinolinedione, bis-azaindole, 3-cyanoquinoline, 2,4-bis-arylamino-1,3-pyrimidine, pyrrolopyrimidine, pyrrole-5-carboxaldehyde, picropodophyllin (PPP), tyrphostin derivatives. While most inhibitors bind to the ATP binding pocket, MSC1609119A-1 functions as allosteric inhibitor and binds close to the DFG motif and the activation loop. In terms of biological role, receptor tyrosine kinase which mediates actions of insulin-like growth factor 1 (IGF1). Binds IGF1 with high affinity and IGF2 and insulin (INS) with a lower affinity. The activated IGF1R is involved in cell growth and survival control. IGF1R is crucial for tumor transformation and survival of malignant cell. Ligand binding activates the receptor kinase, leading to receptor autophosphorylation, and tyrosines phosphorylation of multiple substrates, that function as signaling adapter proteins including, the insulin-receptor substrates (IRS1/2), Shc and 14-3-3 proteins. Phosphorylation of IRSs proteins lead to the activation of two main signaling pathways: the PI3K-AKT/PKB pathway and the Ras-MAPK pathway. The result of activating the MAPK pathway is increased cellular proliferation, whereas activating the PI3K pathway inhibits apoptosis and stimulates protein synthesis. Phosphorylated IRS1 can activate the 85 kDa regulatory subunit of PI3K (PIK3R1), leading to activation of several downstream substrates, including protein AKT/PKB. AKT phosphorylation, in turn, enhances protein synthesis through mTOR activation and triggers the antiapoptotic effects of IGFIR through phosphorylation and inactivation of BAD. In parallel to PI3K-driven signaling, recruitment of Grb2/SOS by phosphorylated IRS1 or Shc leads to recruitment of Ras and activation of the ras-MAPK pathway. In addition to these two main signaling pathways IGF1R signals also through the Janus kinase/signal transducer and activator of transcription pathway (JAK/STAT). Phosphorylation of JAK proteins can lead to phosphorylation/activation of signal transducers and activators of transcription (STAT) proteins. In particular activation of STAT3, may be essential for the transforming activity of IGF1R. The JAK/STAT pathway activates gene transcription and may be responsible for the transforming activity. JNK kinases can also be activated by the IGF1R. IGF1 exerts inhibiting activities on JNK activation via phosphorylation and inhibition of MAP3K5/ASK1, which is able to directly associate with the IGF1R. When present in a hybrid receptor with INSR, binds IGF1. The protein is Insulin-like growth factor 1 receptor (Igf1r) of Mus musculus (Mouse).